Reading from the N-terminus, the 175-residue chain is MDLKSAIRTIPDYPEPGIQFRDVTTLIGDARAFRVAIDRMVQPWAGAKIDKVAGTEARGFILGGAVAHQLSVGFVPVRKRGKLPWRTLREDYELEYGQDTIEIHVDAIAEGDRVLLVDDLIATGGTAEASIKLLQRAGATVVGATFIIDLPELGGAERIEAMGVPVSSLVAYEGT.

This sequence belongs to the purine/pyrimidine phosphoribosyltransferase family. Homodimer.

The protein resides in the cytoplasm. It catalyses the reaction AMP + diphosphate = 5-phospho-alpha-D-ribose 1-diphosphate + adenine. Its pathway is purine metabolism; AMP biosynthesis via salvage pathway; AMP from adenine: step 1/1. Catalyzes a salvage reaction resulting in the formation of AMP, that is energically less costly than de novo synthesis. The chain is Adenine phosphoribosyltransferase from Maricaulis maris (strain MCS10) (Caulobacter maris).